Consider the following 956-residue polypeptide: Thrombospondin-3 (956 aa).

The signal sequence occupies residues 1 to 22; that stretch reads METQELRGALALLLLCFFTSAS. Residues 23 to 193 form the Laminin G-like domain; sequence QDLQVIDLLT…VESMKIILGG (171 aa). Intrachain disulfides connect cysteine 278/cysteine 289, cysteine 283/cysteine 300, cysteine 303/cysteine 314, cysteine 320/cysteine 332, cysteine 326/cysteine 341, cysteine 344/cysteine 368, cysteine 374/cysteine 388, cysteine 382/cysteine 397, cysteine 400/cysteine 412, cysteine 418/cysteine 432, cysteine 426/cysteine 442, cysteine 444/cysteine 455, cysteine 471/cysteine 478, cysteine 483/cysteine 503, cysteine 519/cysteine 539, cysteine 542/cysteine 562, cysteine 578/cysteine 598, cysteine 601/cysteine 621, cysteine 639/cysteine 659, cysteine 679/cysteine 699, and cysteine 715/cysteine 936. Asparagine 310 is a glycosylation site (N-linked (GlcNAc...) asparagine). Residues 316 to 354 form the EGF-like 1; calcium-binding domain; that stretch reads DINECAHADPCFPGSSCINTMPGFHCEACPRGYKGTQVS. The EGF-like 2; calcium-binding domain occupies 370 to 410; sequence DIDECNDGNNGGCDPNSICTNTVGSFKCGPCRLGFLGNQSQ. Asparagine 407 carries N-linked (GlcNAc...) asparagine glycosylation. The EGF-like 3 domain occupies 414-456; it reads PARTCHSPAHSPCHIHAHCLFERNGAVSCQCNVGWAGNGNVCG. 8 TSP type-3 repeats span residues 457–491, 492–527, 528–550, 551–586, 587–609, 610–647, 648–687, and 688–723; these read TDTD…NSGQ, EDAD…NKDQ, QNSD…NNDQ, KDTD…NPLQ, TDRD…NPTQ, TDAD…NSSQ, LDSD…NPNQ, and KDSD…EVTL. Disordered stretches follow at residues 518-537 and 546-702; these read NCRL…SFGD and PNND…CEDD. The span at 555-568 shows a compositional bias: acidic residues; sequence GNGEGDACDNDVDG. A compositionally biased stretch (acidic residues) spans 612–628; sequence ADSDLVGDVCDTNEDSD. A glycan (N-linked (GlcNAc...) asparagine) is linked at asparagine 644. Residues 650–667 show a composition bias toward acidic residues; that stretch reads SDNDGLGDECDGDDDNDG. One can recognise a TSP C-terminal domain in the interval 727 to 941; sequence RAYQTVVLDP…LQYRCNDTVP (215 aa). A glycan (N-linked (GlcNAc...) asparagine) is linked at asparagine 937.

It belongs to the thrombospondin family. In terms of assembly, oligomer; disulfide-linked.

In terms of biological role, adhesive glycoprotein that mediates cell-to-cell and cell-to-matrix interactions. Can bind to fibrinogen, fibronectin, laminin and type V collagen. This is Thrombospondin-3 (THBS3) from Homo sapiens (Human).